We begin with the raw amino-acid sequence, 756 residues long: Polyribonucleotide nucleotidyltransferase (756 aa).

Asp-547 and Asp-553 together coordinate Mg(2+). One can recognise a KH domain in the interval 613 to 672 (PRITSVTIPVNKIGELIGPKGKTINAITEETGADVSIEEDGTVYISAATGEAADAAIDRV). The S1 motif domain occupies 684 to 753 (GERFLGTVVK…NRGKISLVPV (70 aa)).

This sequence belongs to the polyribonucleotide nucleotidyltransferase family. Mg(2+) serves as cofactor.

The protein localises to the cytoplasm. The catalysed reaction is RNA(n+1) + phosphate = RNA(n) + a ribonucleoside 5'-diphosphate. Its function is as follows. Involved in mRNA degradation. Catalyzes the phosphorolysis of single-stranded polyribonucleotides processively in the 3'- to 5'-direction. This is Polyribonucleotide nucleotidyltransferase from Corynebacterium aurimucosum (strain ATCC 700975 / DSM 44827 / CIP 107346 / CN-1) (Corynebacterium nigricans).